The sequence spans 152 residues: Fibroblast growth factor 1 (152 aa).

Alanine 2 is subject to N-acetylalanine. A propeptide spanning residues alanine 2–lysine 15 is cleaved from the precursor. A heparin-binding site is contributed by asparagine 33. Residues lysine 127–lysine 143 form a heparin-binding region.

The protein belongs to the heparin-binding growth factors family. In terms of assembly, monomer. Homodimer. Interacts with FGFR1, FGFR2, FGFR3 and FGFR4. Affinity between fibroblast growth factors (FGFs) and their receptors is increased by heparan sulfate glycosaminoglycans that function as coreceptors. Found in a complex with FGFBP1, FGF1 and FGF2. Interacts with FGFBP1. Part of a Cu(2+)-dependent multiprotein aggregate containing FGF1, S100A13 and SYT1. Interacts with SYT1. Interacts with S100A13. Interacts with LRRC59. Interacts with CSNKA, CSNKB and FIBP. While binding with LRRC59, CSNKA and FIBP seem mutually exclusive, CSNKB and FIBP may cooperatively interact with FGF1. Forms a ternary complex with FGFR1 and ITGAV:ITGB3 and induces the recruitment of PTPN11 to the complex. Post-translationally, in the nucleus, phosphorylated by PKC/PRKCD.

The protein localises to the secreted. It is found in the cytoplasm. The protein resides in the cell cortex. It localises to the cytosol. Its subcellular location is the nucleus. Its function is as follows. Plays an important role in the regulation of cell survival, cell division, angiogenesis, cell differentiation and cell migration. Functions as a potent mitogen in vitro. Acts as a ligand for FGFR1 and integrins. Binds to FGFR1 in the presence of heparin leading to FGFR1 dimerization and activation via sequential autophosphorylation on tyrosine residues which act as docking sites for interacting proteins, leading to the activation of several signaling cascades. Binds to integrin ITGAV:ITGB3. Its binding to integrin, subsequent ternary complex formation with integrin and FGFR1, and the recruitment of PTPN11 to the complex are essential for FGF1 signaling. Induces the phosphorylation and activation of FGFR1, FRS2, MAPK3/ERK1, MAPK1/ERK2 and AKT1. Can induce angiogenesis. The chain is Fibroblast growth factor 1 (FGF1) from Sus scrofa (Pig).